A 673-amino-acid polypeptide reads, in one-letter code: DNA topoisomerase 1 (673 aa).

A Toprim domain is found at 1–134 (MVAEKPKAAA…ARRMKFSTLA (134 aa)). Mg(2+)-binding residues include Glu4 and Asp103. Positions 149–568 (DVEMIEAGMA…MSKKTISKLL (420 aa)) constitute a Topo IA-type catalytic domain. The segment at 189 to 194 (SAGRVQ) is interaction with DNA. Tyr311 functions as the O-(5'-phospho-DNA)-tyrosine intermediate in the catalytic mechanism. The disordered stretch occupies residues 352–374 (LRPVQGSKDDPAHPAIHPTGEKP). The segment at 595-615 (CHLCGRKAVSAVSGYRLCSHH) adopts a C4-type zinc-finger fold.

The protein belongs to the type IA topoisomerase family. Monomer. Mg(2+) is required as a cofactor.

It catalyses the reaction ATP-independent breakage of single-stranded DNA, followed by passage and rejoining.. Releases the supercoiling and torsional tension of DNA, which is introduced during the DNA replication and transcription, by transiently cleaving and rejoining one strand of the DNA duplex. Introduces a single-strand break via transesterification at a target site in duplex DNA. The scissile phosphodiester is attacked by the catalytic tyrosine of the enzyme, resulting in the formation of a DNA-(5'-phosphotyrosyl)-enzyme intermediate and the expulsion of a 3'-OH DNA strand. The free DNA strand then undergoes passage around the unbroken strand, thus removing DNA supercoils. Finally, in the religation step, the DNA 3'-OH attacks the covalent intermediate to expel the active-site tyrosine and restore the DNA phosphodiester backbone. This chain is DNA topoisomerase 1, found in Aeropyrum pernix (strain ATCC 700893 / DSM 11879 / JCM 9820 / NBRC 100138 / K1).